We begin with the raw amino-acid sequence, 103 residues long: Large ribosomal subunit protein bL21 (103 aa).

The protein belongs to the bacterial ribosomal protein bL21 family. As to quaternary structure, part of the 50S ribosomal subunit. Contacts protein L20.

In terms of biological role, this protein binds to 23S rRNA in the presence of protein L20. In Acinetobacter baylyi (strain ATCC 33305 / BD413 / ADP1), this protein is Large ribosomal subunit protein bL21.